The following is a 292-amino-acid chain: Small ribosomal subunit biogenesis GTPase RsgA (292 aa).

Residues 64 to 221 (RSELFRPAVA…LVDTPGFSSL (158 aa)) form the CP-type G domain. Residues 113 to 116 (NKMD) and 164 to 172 (GPSGVGKST) contribute to the GTP site. Residues Cys-245, Cys-250, His-252, and Cys-258 each contribute to the Zn(2+) site.

This sequence belongs to the TRAFAC class YlqF/YawG GTPase family. RsgA subfamily. Monomer. Associates with 30S ribosomal subunit, binds 16S rRNA. It depends on Zn(2+) as a cofactor.

It localises to the cytoplasm. One of several proteins that assist in the late maturation steps of the functional core of the 30S ribosomal subunit. Helps release RbfA from mature subunits. May play a role in the assembly of ribosomal proteins into the subunit. Circularly permuted GTPase that catalyzes slow GTP hydrolysis, GTPase activity is stimulated by the 30S ribosomal subunit. This Clostridium botulinum (strain ATCC 19397 / Type A) protein is Small ribosomal subunit biogenesis GTPase RsgA.